We begin with the raw amino-acid sequence, 142 residues long: 3-hydroxyacyl-[acyl-carrier-protein] dehydratase FabZ (142 aa).

Histidine 48 is an active-site residue.

The protein belongs to the thioester dehydratase family. FabZ subfamily.

It localises to the cytoplasm. The catalysed reaction is a (3R)-hydroxyacyl-[ACP] = a (2E)-enoyl-[ACP] + H2O. Its function is as follows. Involved in unsaturated fatty acids biosynthesis. Catalyzes the dehydration of short chain beta-hydroxyacyl-ACPs and long chain saturated and unsaturated beta-hydroxyacyl-ACPs. The protein is 3-hydroxyacyl-[acyl-carrier-protein] dehydratase FabZ of Ruminiclostridium cellulolyticum (strain ATCC 35319 / DSM 5812 / JCM 6584 / H10) (Clostridium cellulolyticum).